A 231-amino-acid chain; its full sequence is NADH-ubiquinone oxidoreductase chain 4 (231 aa).

7 helical membrane passes run 1-21 (PIAG…YGMI), 34-54 (MFIP…LTCL), 62-82 (LIAY…SIQT), 86-106 (LSGA…LFCL), 118-138 (ILIL…WWLL), 169-189 (TIIL…HIFL), and 211-231 (LLMT…ELVM).

It belongs to the complex I subunit 4 family.

The protein localises to the mitochondrion membrane. It catalyses the reaction a ubiquinone + NADH + 5 H(+)(in) = a ubiquinol + NAD(+) + 4 H(+)(out). Its function is as follows. Core subunit of the mitochondrial membrane respiratory chain NADH dehydrogenase (Complex I) that is believed to belong to the minimal assembly required for catalysis. Complex I functions in the transfer of electrons from NADH to the respiratory chain. The immediate electron acceptor for the enzyme is believed to be ubiquinone. The protein is NADH-ubiquinone oxidoreductase chain 4 (MT-ND4) of Causus rhombeatus (Rhombic night adder).